The following is a 157-amino-acid chain: Small ribosomal subunit protein uS7 (157 aa).

The protein belongs to the universal ribosomal protein uS7 family. As to quaternary structure, part of the 30S ribosomal subunit. Contacts proteins S9 and S11.

In terms of biological role, one of the primary rRNA binding proteins, it binds directly to 16S rRNA where it nucleates assembly of the head domain of the 30S subunit. Is located at the subunit interface close to the decoding center, probably blocks exit of the E-site tRNA. The polypeptide is Small ribosomal subunit protein uS7 (Blochmanniella floridana).